We begin with the raw amino-acid sequence, 275 residues long: Large ribosomal subunit protein uL2 (275 aa).

Over residues 38 to 53 the composition is skewed to polar residues; the sequence is SSKAGRNNNGRITTRH. Disordered stretches follow at residues 38-60 and 224-257; these read SSKAGRNNNGRITTRHQGGGHKQ and AMNPIDHPHGGGEGRTAAGRDPVSPWGTPTKGFR.

This sequence belongs to the universal ribosomal protein uL2 family. Part of the 50S ribosomal subunit. Forms a bridge to the 30S subunit in the 70S ribosome.

In terms of biological role, one of the primary rRNA binding proteins. Required for association of the 30S and 50S subunits to form the 70S ribosome, for tRNA binding and peptide bond formation. It has been suggested to have peptidyltransferase activity; this is somewhat controversial. Makes several contacts with the 16S rRNA in the 70S ribosome. This Burkholderia pseudomallei (strain 1106a) protein is Large ribosomal subunit protein uL2.